Reading from the N-terminus, the 610-residue chain is Manganese lipoxygenase (610 aa).

Positions 1 to 16 (MVALLIFLGIFTCVET) are cleaved as a signal peptide. Residues 47-610 (FTLPNEDDEI…PGVIPFYLSV (564 aa)) enclose the Lipoxygenase domain. Asparagine 157 and asparagine 259 each carry an N-linked (GlcNAc...) asparagine glycan. Residues histidine 290 and histidine 295 each coordinate Mn(2+). Asparagine 386 carries an N-linked (GlcNAc...) asparagine glycan. The Mn(2+) site is built by histidine 475 and asparagine 479. Residue asparagine 540 is glycosylated (N-linked (GlcNAc...) asparagine). A Mn(2+)-binding site is contributed by valine 610.

It belongs to the lipoxygenase family. Manganese lipoxygenase subfamily. The cofactor is Mn(2+). In terms of processing, N- and O-glycosylated.

It is found in the secreted. The enzyme catalyses (9Z,12Z)-octadecadienoate + O2 = (11S)-hydroperoxy-(9Z,12Z)-octadecadienoate. The catalysed reaction is (9Z,12Z)-octadecadienoate + O2 = (11R)-hydroperoxy-(9Z,12Z)-octadecadienoate. It carries out the reaction (9Z,12Z)-octadecadienoate + O2 = (13S)-hydroperoxy-(9Z,11E)-octadecadienoate. It catalyses the reaction (9Z,12Z,15Z)-octadecatrienoate + O2 = (11S)-hydroperoxy-(9Z,12Z,15Z)-octadecatrienoate. Its function is as follows. Lipoxygenase that metabolizes linoleic and alpha-linolenic acids to 9-, 11- and 13-hydroperoxy fatty acids. Oxidizes linoleic acid to mainly 11R-, 13S- and racemic 9-HPODE, and alpha-linolenic acid to 11-HPOTrE. The protein is Manganese lipoxygenase of Fusarium oxysporum (strain Fo5176) (Fusarium vascular wilt).